Reading from the N-terminus, the 101-residue chain is MPFSHTKIVGPAGRYGARYGMGIRRKITAIEVKQRGKHRCPSCRSLVRLQRIAFGIWKCPKCGFTFAGGAWTPQTIMGKALAPEELKEVEAQKARWRETAR.

Residues 40-62 form a C4-type zinc finger; it reads CPSCRSLVRLQRIAFGIWKCPKC.

Belongs to the eukaryotic ribosomal protein eL43 family. It depends on Zn(2+) as a cofactor.

The polypeptide is Large ribosomal subunit protein eL43 (Pyrobaculum neutrophilum (strain DSM 2338 / JCM 9278 / NBRC 100436 / V24Sta) (Thermoproteus neutrophilus)).